The chain runs to 338 residues: 1-aminocyclopropane-1-carboxylate deaminase (338 aa).

Lys51 carries the post-translational modification N6-(pyridoxal phosphate)lysine. Ser78 acts as the Nucleophile in catalysis.

It belongs to the ACC deaminase/D-cysteine desulfhydrase family. Homotrimer. It depends on pyridoxal 5'-phosphate as a cofactor.

The catalysed reaction is 1-aminocyclopropane-1-carboxylate + H2O = 2-oxobutanoate + NH4(+). Catalyzes a cyclopropane ring-opening reaction, the irreversible conversion of 1-aminocyclopropane-1-carboxylate (ACC) to ammonia and alpha-ketobutyrate. Allows growth on ACC as a nitrogen source. The polypeptide is 1-aminocyclopropane-1-carboxylate deaminase (Burkholderia orbicola (strain MC0-3)).